A 451-amino-acid chain; its full sequence is Interferon-related developmental regulator 1 (451 aa).

The span at 1–10 (MPKNKKRNTP) shows a compositional bias: basic residues. Positions 1–69 (MPKNKKRNTP…PSSFAEDGPE (69 aa)) are disordered. A compositionally biased stretch (low complexity) spans 23–33 (AAAATAATAGG). A compositionally biased stretch (polar residues) spans 49-61 (ETMSHCSGYSDPS).

The protein belongs to the IFRD family. Interacts with PSIP1/LEDGF. As to expression, expressed in a variety of tissues.

Functionally, could play a role in regulating gene activity in the proliferative and/or differentiative pathways induced by NGF. May be an autocrine factor that attenuates or amplifies the initial ligand-induced signal. The polypeptide is Interferon-related developmental regulator 1 (IFRD1) (Homo sapiens (Human)).